The primary structure comprises 359 residues: Ornithine cyclodeaminase (359 aa).

L-ornithine-binding residues include Arg53 and Lys77. NAD(+) contacts are provided by residues Thr92, Arg120, 147-148 (AQ), Asp169, Thr209, 232-235 (VGGD), Lys239, and Ser300. Residue Arg120 coordinates L-ornithine. L-ornithine is bound at residue Asp235. Asp235 functions as the Proton donor/acceptor in the catalytic mechanism. Val301 contacts L-ornithine.

It belongs to the ornithine cyclodeaminase/mu-crystallin family. The cofactor is NAD(+).

It catalyses the reaction L-ornithine = L-proline + NH4(+). Its pathway is amino-acid biosynthesis; L-proline biosynthesis; L-proline from L-ornithine: step 1/1. In terms of biological role, catalyzes the conversion of L-ornithine into L-proline with release of ammonia. The protein is Ornithine cyclodeaminase of Brucella melitensis biotype 1 (strain ATCC 23456 / CCUG 17765 / NCTC 10094 / 16M).